The following is a 903-amino-acid chain: Dynamin-like GTPase msp1, mitochondrial (903 aa).

The N-terminal 78 residues, 1-78, are a transit peptide targeting the mitochondrion; it reads MGISWFLSRF…RFFSFSSISR (78 aa). Residues 86 to 103 traverse the membrane as a helical segment; it reads LPVAGFSLVAGGAAYIGA. The segment covering 167–188 has biased composition (basic and acidic residues); it reads VLQAERAKEHRSNSNDKQKSSD. The disordered stretch occupies residues 167 to 198; it reads VLQAERAKEHRSNSNDKQKSSDNDEDPNDTTV. A helical transmembrane segment spans residues 198-214; that stretch reads VGIGAALAASILSVDSV. Residues 260-531 form the Dynamin-type G domain; sequence AVTLPSIVVI…LEYTMSKNLQ (272 aa). A G1 motif region spans residues 270–277; the sequence is GSQSSGKS. 7 residues coordinate GTP: Ser273, Ser274, Gly275, Lys276, Ser277, Ser278, and Gly292. Residue Ser277 coordinates Mg(2+). The interval 296–298 is G2 motif; the sequence is VTR. Mg(2+) contacts are provided by Thr297 and Asp370. The interval 370–373 is G3 motif; the sequence is DLPG. The interval 438–441 is G4 motif; it reads TKMD. Positions 439, 441, and 468 each coordinate GTP. The segment at 467–470 is G5 motif; it reads ISRI. The segment at 691–805 is paddle region; sequence ATSEQVENCV…VLKSRACKHK (115 aa). A disulfide bridge links Cys802 with Cys811. The GED domain occupies 805-898; that stretch reads KEAKYTCPEI…KINSLVILEQ (94 aa).

Belongs to the TRAFAC class dynamin-like GTPase superfamily. Dynamin/Fzo/YdjA family. Homooligomer. Interacts with cdr1. Cleavage of the transit peptide by mitochondrial processing protease (MPP) produces a long integral membrane form of msp1 (l-msp1). Further processing by a rhomboid protease after the transmembrane regions produces a short peripheral membrane form of msp1 (s-msp1). Both isoforms are required for full activity.

The protein localises to the mitochondrion inner membrane. Its subcellular location is the mitochondrion intermembrane space. The enzyme catalyses GTP + H2O = GDP + phosphate + H(+). Dynamin-related GTPase that is essential for normal mitochondrial morphology by mediating fusion of the mitochondrial inner membranes and maintaining respiratory chain function. Exists in two forms: the transmembrane, long form (Dynamin-like GTPase msp1, long form; l-msp1), which is tethered to the inner mitochondrial membrane, and the short soluble form (Dynamin-like GTPase msp1, short form; s-msp1), which results from proteolytic cleavage and localizes in the intermembrane space. Both forms (l-msp1 and s-msp1) cooperate to catalyze the fusion of the mitochondrial inner membrane. Its role in mitochondrial morphology is required for mitochondrial genome maintenance. Its function is as follows. Constitutes the transmembrane long form (l-msp1) that plays a central role in mitochondrial inner membrane fusion. L-msp1 and the soluble short form (s-msp1) form higher-order helical assemblies that coordinate the fusion of mitochondrial inner membranes. Inner membrane-anchored l-msp1 molecules initiate membrane remodeling by recruiting soluble s-msp1 to rapidly polymerize into a flexible cylindrical scaffold encaging the mitochondrial inner membrane. Once at the membrane surface, the formation of s-msp1 helices induce bilayer curvature. Msp1 dimerization through the paddle region, which inserts into cardiolipin-containing membrane, promotes GTP hydrolysis and the helical assembly of a flexible msp1 lattice on the membrane, which drives membrane curvature and mitochondrial fusion. Functionally, constitutes the soluble short form (s-msp1) generated by cleavage, which plays a central role in mitochondrial inner membrane fusion. The transmembrane long form (l-msp1) and the s-msp1 form higher-order helical assemblies that coordinate the fusion of mitochondrial inner membranes. Inner membrane-anchored l-msp1 molecules initiate membrane remodeling by recruiting soluble s-msp1 to rapidly polymerize into a flexible cylindrical scaffold encaging the mitochondrial inner membrane. Once at the membrane surface, the formation of s-msp1 helices induce bilayer curvature. Msp1 dimerization through the paddle region, which inserts into cardiolipin-containing membrane, promotes GTP hydrolysis and the helical assembly of a flexible msp1 lattice on the membrane, which drives membrane curvature and mitochondrial fusion. In Schizosaccharomyces pombe (strain 972 / ATCC 24843) (Fission yeast), this protein is Dynamin-like GTPase msp1, mitochondrial.